The chain runs to 493 residues: GTPase Der (493 aa).

The EngA-type G 1 domain maps to 3–166 (PVIALVGRPN…EALGIFPKDN (164 aa)). Residues 9 to 16 (GRPNVGKS), 56 to 60 (DTGGI), and 118 to 121 (NKVD) contribute to the GTP site. Residues 166–195 (NAEEEGEGEPASEEVAEGEEPTRIPGPSEK) form a disordered region. The segment covering 167–184 (AEEEGEGEPASEEVAEGE) has biased composition (acidic residues). The 174-residue stretch at 198-371 (IKIAIIGRPN…SVQESFRSAV (174 aa)) folds into the EngA-type G 2 domain. GTP contacts are provided by residues 204-211 (GRPNVGKS), 251-255 (DTAGV), and 316-319 (NKWD). One can recognise a KH-like domain in the interval 372–456 (TRWPTSRLTS…PIRIEYKGGE (85 aa)). Over residues 454–463 (GGENPYEGKK) the composition is skewed to basic and acidic residues. Residues 454–493 (GGENPYEGKKNSLTARQVNKKRRLMSHHKKAEKKKKDKRR) are disordered. Over residues 471–493 (VNKKRRLMSHHKKAEKKKKDKRR) the composition is skewed to basic residues.

It belongs to the TRAFAC class TrmE-Era-EngA-EngB-Septin-like GTPase superfamily. EngA (Der) GTPase family. Associates with the 50S ribosomal subunit.

Its function is as follows. GTPase that plays an essential role in the late steps of ribosome biogenesis. In Pseudomonas aeruginosa (strain ATCC 15692 / DSM 22644 / CIP 104116 / JCM 14847 / LMG 12228 / 1C / PRS 101 / PAO1), this protein is GTPase Der.